Reading from the N-terminus, the 444-residue chain is Phosphoglucosamine mutase (444 aa).

Residue serine 100 is the Phosphoserine intermediate of the active site. Positions 100, 234, 236, and 238 each coordinate Mg(2+). A Phosphoserine modification is found at serine 100.

The protein belongs to the phosphohexose mutase family. Mg(2+) is required as a cofactor. Activated by phosphorylation.

The catalysed reaction is alpha-D-glucosamine 1-phosphate = D-glucosamine 6-phosphate. Catalyzes the conversion of glucosamine-6-phosphate to glucosamine-1-phosphate. This chain is Phosphoglucosamine mutase, found in Rubrobacter xylanophilus (strain DSM 9941 / JCM 11954 / NBRC 16129 / PRD-1).